A 52-amino-acid polypeptide reads, in one-letter code: Conotoxin Cal6.36 (52 aa).

The N-terminal stretch at 1 to 22 (MKVTCVLTLAVLILTVGQMVTA) is a signal peptide. Intrachain disulfides connect Cys-24–Cys-39, Cys-31–Cys-43, and Cys-38–Cys-47.

In terms of tissue distribution, expressed by the venom duct.

The protein localises to the secreted. Functionally, probable neurotoxin. The sequence is that of Conotoxin Cal6.36 from Californiconus californicus (California cone).